The chain runs to 171 residues: Shikimate kinase (171 aa).

ATP is bound at residue 14 to 19; sequence GAGKST. S18 lines the Mg(2+) pocket. Residues D36, R60, and G82 each contribute to the substrate site. ATP is bound at residue R120. R139 serves as a coordination point for substrate. An ATP-binding site is contributed by Q156.

Belongs to the shikimate kinase family. Monomer. Mg(2+) is required as a cofactor.

The protein resides in the cytoplasm. The enzyme catalyses shikimate + ATP = 3-phosphoshikimate + ADP + H(+). The protein operates within metabolic intermediate biosynthesis; chorismate biosynthesis; chorismate from D-erythrose 4-phosphate and phosphoenolpyruvate: step 5/7. Catalyzes the specific phosphorylation of the 3-hydroxyl group of shikimic acid using ATP as a cosubstrate. The chain is Shikimate kinase from Shewanella loihica (strain ATCC BAA-1088 / PV-4).